A 624-amino-acid polypeptide reads, in one-letter code: Probable potassium transport system protein Kup 1 (624 aa).

Transmembrane regions (helical) follow at residues leucine 10–leucine 30, leucine 48–phenylalanine 68, proline 94–threonine 114, leucine 133–alanine 153, isoleucine 159–isoleucine 179, phenylalanine 210–glycine 230, phenylalanine 242–valine 262, proline 270–alanine 290, isoleucine 331–phenylalanine 351, isoleucine 363–isoleucine 383, threonine 388–alanine 408, and phenylalanine 413–serine 433.

Belongs to the HAK/KUP transporter (TC 2.A.72) family.

Its subcellular location is the cell inner membrane. It carries out the reaction K(+)(in) + H(+)(in) = K(+)(out) + H(+)(out). Functionally, transport of potassium into the cell. Likely operates as a K(+):H(+) symporter. The sequence is that of Probable potassium transport system protein Kup 1 from Legionella pneumophila (strain Paris).